The chain runs to 224 residues: MGLLETNQYLHSQLEKSKQDFRDLTEKLLTSQATVYSLAKQLQKYKCEEYKDLIESVLEEEAPFEEGNLAEKRRLATGLGRYDSLIEAQARELTCLRQKIQEGEGVCHLFTQHAKNTIKTFESFIKTTDMTYYQRQRFCELLAQGSQMAERLASKLSTENHHDRKDEEGQESLAARLSMGLQGEEVNEVLEDSLDEKYLTHSSHHDSHRPPSSIASVCDVQDQL.

An Olduvai domain is found at 159 to 224; that stretch reads ENHHDRKDEE…ASVCDVQDQL (66 aa). Over residues 198–209 the composition is skewed to basic and acidic residues; the sequence is YLTHSSHHDSHR. Residues 198-224 are disordered; the sequence is YLTHSSHHDSHRPPSSIASVCDVQDQL.

It belongs to the NBPF family.

This is NBPF family member NBPF6-like protein from Bos taurus (Bovine).